The primary structure comprises 197 residues: Phosphoheptose isomerase (197 aa).

Positions Met34–Gln196 constitute an SIS domain. Asn49 to Gly51 lines the substrate pocket. 2 residues coordinate Zn(2+): His58 and Glu62. Substrate contacts are provided by residues Glu62, Asn91–Asp92, Ser117–Ser119, Ser122, and Gln172. Residues Gln172 and His180 each coordinate Zn(2+).

This sequence belongs to the SIS family. GmhA subfamily. As to quaternary structure, homotetramer. The cofactor is Zn(2+).

It localises to the cytoplasm. It carries out the reaction 2 D-sedoheptulose 7-phosphate = D-glycero-alpha-D-manno-heptose 7-phosphate + D-glycero-beta-D-manno-heptose 7-phosphate. The protein operates within carbohydrate biosynthesis; D-glycero-D-manno-heptose 7-phosphate biosynthesis; D-glycero-alpha-D-manno-heptose 7-phosphate and D-glycero-beta-D-manno-heptose 7-phosphate from sedoheptulose 7-phosphate: step 1/1. Functionally, catalyzes the isomerization of sedoheptulose 7-phosphate in D-glycero-D-manno-heptose 7-phosphate. The sequence is that of Phosphoheptose isomerase from Shewanella baltica (strain OS223).